Consider the following 346-residue polypeptide: Ephrin-B1 (346 aa).

The first 27 residues, 1–27 (MARPGQRWLGKWLVAMVVWALCRLATP), serve as a signal peptide directing secretion. Residues 28–237 (LAKNLEPVSW…GDPDGFFNSK (210 aa)) are Extracellular-facing. Positions 30–164 (KNLEPVSWSS…TRTMKIIMKV (135 aa)) constitute an Ephrin RBD domain. Intrachain disulfides connect cysteine 64–cysteine 101 and cysteine 89–cysteine 153. The N-linked (GlcNAc...) asparagine glycan is linked to asparagine 139. A disordered region spans residues 169–228 (NAVTPEQLTTSRPSKEADNTVKMATQAPGSRGSLGDSDGKHETVNQEEKSGPGASGGSSG). Residues 205–218 (SDGKHETVNQEEKS) show a composition bias toward basic and acidic residues. A helical transmembrane segment spans residues 238-258 (VALFAAVGAGCVIFLLIIIFL). The Cytoplasmic segment spans residues 259–346 (TVLLLKLRKR…QSPANIYYKV (88 aa)). The Nuclear localization signal signature appears at 260–273 (VLLLKLRKRHRKHT). Residues 263-294 (LKLRKRHRKHTQQRAAALSLSTLASPKGGSGT) form an interaction with ZHX2 region. Phosphoserine is present on residues serine 281 and serine 287. Positions 344–346 (YKV) match the PDZ-binding motif.

The protein belongs to the ephrin family. As to quaternary structure, interacts (via PDZ-binding motif) with GRIP1 and GRIP2 (via PDZ domain 6). Interacts with TLE1. The intracellular domain peptide interacts with ZHX2; the interaction enhances ZHX2 transcriptional repression activity. Inducible phosphorylation of tyrosine residues in the cytoplasmic domain. In terms of processing, proteolytically processed. The ectodomain is cleaved, probably by a metalloprotease, to produce a membrane-tethered C-terminal fragment. This fragment is then further processed by the gamma-secretase complex to yield a soluble intracellular domain peptide which can translocate to the nucleus. The intracellular domain peptide is highly labile suggesting that it is targeted for degradation by the proteasome. In terms of tissue distribution, widely expressed. Detected in both neuronal and non-neuronal tissues. Seems to have particularly strong expression in retina, sciatic nerve, heart and spinal cord.

The protein localises to the cell membrane. The protein resides in the membrane raft. It localises to the nucleus. Cell surface transmembrane ligand for Eph receptors, a family of receptor tyrosine kinases which are crucial for migration, repulsion and adhesion during neuronal, vascular and epithelial development. Binding to Eph receptors residing on adjacent cells leads to contact-dependent bidirectional signaling into neighboring cells. Shows high affinity for the receptor tyrosine kinase EPHB1/ELK. Can also bind EPHB2 and EPHB3. Binds to, and induces collapse of, commissural axons/growth cones in vitro. May play a role in constraining the orientation of longitudinally projecting axons. In Homo sapiens (Human), this protein is Ephrin-B1 (EFNB1).